The primary structure comprises 328 residues: Probable cell division protein WhiA (328 aa).

A DNA-binding region (H-T-H motif) is located at residues 276–309 (SLEELGRLADPQMTKDAVAGRIRRLLHMADKKAS).

Belongs to the WhiA family.

Its function is as follows. Involved in cell division and chromosome segregation. This chain is Probable cell division protein WhiA, found in Corynebacterium diphtheriae (strain ATCC 700971 / NCTC 13129 / Biotype gravis).